The sequence spans 219 residues: Small ribosomal subunit protein uS3 (219 aa).

In terms of domain architecture, KH type-2 spans 39 to 108 (IKEFIKKNYF…KVTVKVQEIK (70 aa)).

This sequence belongs to the universal ribosomal protein uS3 family. Part of the 30S ribosomal subunit. Forms a tight complex with proteins S10 and S14.

In terms of biological role, binds the lower part of the 30S subunit head. Binds mRNA in the 70S ribosome, positioning it for translation. This is Small ribosomal subunit protein uS3 from Fusobacterium nucleatum subsp. nucleatum (strain ATCC 25586 / DSM 15643 / BCRC 10681 / CIP 101130 / JCM 8532 / KCTC 2640 / LMG 13131 / VPI 4355).